A 430-amino-acid polypeptide reads, in one-letter code: MKTELSQKLFEKANDLFPGGVNSPVRAFKGVGGTPRFISRAKGSHIFDVDGNDYVDYVLSWGPMIVGHCHPEVMREVQDAMKEGSSFGAPSPREILLAELVRERMPWVEKMRFVSSGTEATTSAIRVARGFTGRDDIVKFDGCYHGAGDPLLVKAGSGVETLGLPDSPGVPADVARHTLTAPYNDLPALEQVFQAKGASIAAVILEPVVGNMGVLVPRPGFLQGVHDLCRKHGALFIVDEVMTGFRLSSGGACGLYGLRPDLVTFGKVIGAGLPVGAFGGRRDVMDRVAPAGPIYQAGTLSGNPMAMAAGHAALKLMTEAAYRKLEALSAALAEGLQAAAAEAKVPVQVNRVGSMLTVFFSDRPVFDAASARACNTRRFGAFFHAMLEHGAYLPPSQFEAAFLSTAHTDDDVARTVAAARLAFAEAAKVA.

K267 carries the post-translational modification N6-(pyridoxal phosphate)lysine.

Belongs to the class-III pyridoxal-phosphate-dependent aminotransferase family. HemL subfamily. Homodimer. It depends on pyridoxal 5'-phosphate as a cofactor.

It localises to the cytoplasm. The enzyme catalyses (S)-4-amino-5-oxopentanoate = 5-aminolevulinate. It participates in porphyrin-containing compound metabolism; protoporphyrin-IX biosynthesis; 5-aminolevulinate from L-glutamyl-tRNA(Glu): step 2/2. The chain is Glutamate-1-semialdehyde 2,1-aminomutase from Anaeromyxobacter sp. (strain K).